The sequence spans 200 residues: uncharacterized protein (200 aa).

This is an uncharacterized protein from Ureaplasma parvum serovar 3 (strain ATCC 700970).